We begin with the raw amino-acid sequence, 191 residues long: MEASFIRSLPSAGNFANLLPTGTALIFETLLPSFSNGGECNNKPVNKLLTITLISFCAAACFFSSFTDSYVGQDGRIYYGIATSNGLHILNDYPDEGYDPESGLTADKRERYKLSFVDFVHAFVSVIVFLALAVESSDFRRCLLPEDDENSWGGHFVLMIKYFAVMVLTMASFFFAIFPSKRRGIGISDIR.

4 helical membrane passes run Phe-15–Ser-35, Leu-48–Asp-68, Leu-114–Val-134, and Leu-158–Phe-178.

This sequence belongs to the plant DMP1 protein family. In terms of tissue distribution, restricted to flowers.

The protein localises to the membrane. In terms of biological role, involved in membrane remodeling. This is Protein DMP10 from Arabidopsis thaliana (Mouse-ear cress).